The sequence spans 78 residues: Large ribosomal subunit protein bL28 (78 aa).

A disordered region spans residues 1–31; sequence MAAHCQVTGAEPGFGHSISHSHRRNKRRFDP.

Belongs to the bacterial ribosomal protein bL28 family.

The chain is Large ribosomal subunit protein bL28 from Pseudarthrobacter chlorophenolicus (strain ATCC 700700 / DSM 12829 / CIP 107037 / JCM 12360 / KCTC 9906 / NCIMB 13794 / A6) (Arthrobacter chlorophenolicus).